The sequence spans 1522 residues: Lysophospholipase nte1 (1522 aa).

The interval 1–24 (MADGVTQVDSTGLHSFSPSPSLSS) is disordered. Residues 1-65 (MADGVTQVDS…LPPVPTTMAG (65 aa)) lie on the Cytoplasmic side of the membrane. Low complexity predominate over residues 15–24 (SFSPSPSLSS). A helical transmembrane segment spans residues 66–86 (WIGWVFSFFFQVIPSVLYWII). The Lumenal portion of the chain corresponds to 87 to 108 (TFSTITLPTWLFTLFSMSLTFT). The chain crosses the membrane as a helical span at residues 109 to 129 (MNFTTLLLIVLAVVSTISWFI). Residues 130–1522 (RYRFLNMYSR…RTLAPRRASI (1393 aa)) lie on the Cytoplasmic side of the membrane. Disordered regions lie at residues 308–384 (VPNS…SVHP), 523–544 (RAAT…GVSP), and 757–776 (TTTA…SRRR). The span at 369–381 (ESRKHSSRKRRKS) shows a compositional bias: basic residues. A nucleoside 3',5'-cyclic phosphate-binding positions include 680–800 (GGTS…AVAS) and 840–960 (RLTS…IAQR). Residues 1219–1383 (LVLGGGGARG…IDNLTVDHMK (165 aa)) enclose the PNPLA domain. Residues 1223-1228 (GGGARG) carry the GXGXXG motif. Residues 1250-1254 (GTSIG) carry the GXSXG motif. Ser1252 (nucleophile) is an active-site residue. Asp1370 functions as the Proton acceptor in the catalytic mechanism. The short motif at 1370–1372 (DGG) is the DGA/G element. The segment at 1501–1522 (LPEETEEKKKLQRTLAPRRASI) is disordered.

This sequence belongs to the NTE family.

It localises to the endoplasmic reticulum membrane. The catalysed reaction is a 1-acyl-sn-glycero-3-phosphocholine + H2O = sn-glycerol 3-phosphocholine + a fatty acid + H(+). With respect to regulation, inhibited by organophosphorus esters. Functionally, intracellular phospholipase B that catalyzes the double deacylation of phosphatidylcholine (PC) to glycerophosphocholine (GroPCho). Plays an important role in membrane lipid homeostasis. Responsible for the rapid PC turnover in response to inositol, elevated temperatures, or when choline is present in the growth medium. The protein is Lysophospholipase nte1 (nte1) of Aspergillus fumigatus (strain ATCC MYA-4609 / CBS 101355 / FGSC A1100 / Af293) (Neosartorya fumigata).